The chain runs to 98 residues: MLAINLNLTVAFMLALTGVLVYRSHLMSTLLCLEGMMLSLFILMTLLIVHFHMFSMSMAPLILLVFSACEAGVGLALLVKISSTHGNDYVQNLNLLQC.

Helical transmembrane passes span 1-21 (MLAI…GVLV), 25-45 (HLMS…ILMT), and 57-79 (SMAP…ALLV).

The protein belongs to the complex I subunit 4L family. In terms of assembly, core subunit of respiratory chain NADH dehydrogenase (Complex I) which is composed of 45 different subunits.

Its subcellular location is the mitochondrion inner membrane. It carries out the reaction a ubiquinone + NADH + 5 H(+)(in) = a ubiquinol + NAD(+) + 4 H(+)(out). Functionally, core subunit of the mitochondrial membrane respiratory chain NADH dehydrogenase (Complex I) which catalyzes electron transfer from NADH through the respiratory chain, using ubiquinone as an electron acceptor. Part of the enzyme membrane arm which is embedded in the lipid bilayer and involved in proton translocation. This Dasyurus hallucatus (Northern quoll) protein is NADH-ubiquinone oxidoreductase chain 4L (MT-ND4L).